Here is a 27-residue protein sequence, read N- to C-terminus: Nemertide alpha-8 (27 aa).

3 disulfides stabilise this stretch: Cys2/Cys16, Cys9/Cys20, and Cys15/Cys26.

Belongs to the nemertide family. Confined to the epidermis and to the mucus layer.

It localises to the secreted. Its function is as follows. Highly potent toxin against both insect and some mammalian sodium channels (Nav). It potently inhibits inactivation of insect sodium channels of B.germanica (BgNav1) and also delays the inactivation of mammalian Nav with potent activity on Nav1.3/SCN3A and Nav1.4/SCN4A. 1 uM is enough to completely inhibits the inactivation, resulting in sustained non-inactivating currents. In addition, the toxin significantly enhances the recovery from inactivation, and the open state is not required for the toxin to interact with the channel. In vivo, injection into brine shrimp (Artemia salina) stops movement or causes death after 24 hours (EC(50)=0.4 uM). The protein is Nemertide alpha-8 of Riseriellus occultus (Ribbon worm).